We begin with the raw amino-acid sequence, 358 residues long: DnaJ homolog subfamily C member 18 (358 aa).

A J domain is found at 82-146 (NYYEILGVSR…DKRLRYDEYG (65 aa)). A helical transmembrane segment spans residues 228-248 (AFIQLLPVLVIVIISVITQLL).

The protein resides in the endoplasmic reticulum membrane. Its function is as follows. (Microbial infection) In case of infection by polyomavirus, involved in the virus endoplasmic reticulum membrane penetration and infection. Regulates the recruitment of DNAJB12:DNAJB14 into SV40-induced foci and all cooperate to guide SV40 across the endoplasmic reticulum membrane. The foci represent the site from which SV40 penetrates into the cytosol. In Homo sapiens (Human), this protein is DnaJ homolog subfamily C member 18.